Here is an 88-residue protein sequence, read N- to C-terminus: Elongation factor 1-beta (88 aa).

This sequence belongs to the EF-1-beta/EF-1-delta family.

In terms of biological role, promotes the exchange of GDP for GTP in EF-1-alpha/GDP, thus allowing the regeneration of EF-1-alpha/GTP that could then be used to form the ternary complex EF-1-alpha/GTP/AAtRNA. This Thermoplasma acidophilum (strain ATCC 25905 / DSM 1728 / JCM 9062 / NBRC 15155 / AMRC-C165) protein is Elongation factor 1-beta (ef1b).